A 288-amino-acid chain; its full sequence is 4-diphosphocytidyl-2-C-methyl-D-erythritol kinase (288 aa).

The active site involves Lys-13. Position 96 to 106 (96 to 106) interacts with ATP; the sequence is PIGGGIGGGSS. Asp-138 is a catalytic residue.

It belongs to the GHMP kinase family. IspE subfamily.

It catalyses the reaction 4-CDP-2-C-methyl-D-erythritol + ATP = 4-CDP-2-C-methyl-D-erythritol 2-phosphate + ADP + H(+). It participates in isoprenoid biosynthesis; isopentenyl diphosphate biosynthesis via DXP pathway; isopentenyl diphosphate from 1-deoxy-D-xylulose 5-phosphate: step 3/6. Catalyzes the phosphorylation of the position 2 hydroxy group of 4-diphosphocytidyl-2C-methyl-D-erythritol. This is 4-diphosphocytidyl-2-C-methyl-D-erythritol kinase from Aliivibrio salmonicida (strain LFI1238) (Vibrio salmonicida (strain LFI1238)).